The primary structure comprises 450 residues: tRNA-2-methylthio-N(6)-dimethylallyladenosine synthase (450 aa).

Residues 8 to 124 form the MTTase N-terminal domain; it reads RTLHITTWGC…LPELIAEIEA (117 aa). The [4Fe-4S] cluster site is built by C17, C52, C87, C162, C166, and C169. The region spanning 148–380 is the Radical SAM core domain; that stretch reads ASQGPIAFLA…QAVLRDQQHA (233 aa). A TRAM domain is found at 383-445; the sequence is RAQVGRSFEV…PNSLMASLTQ (63 aa).

This sequence belongs to the methylthiotransferase family. MiaB subfamily. Monomer. [4Fe-4S] cluster serves as cofactor.

The protein localises to the cytoplasm. The enzyme catalyses N(6)-dimethylallyladenosine(37) in tRNA + (sulfur carrier)-SH + AH2 + 2 S-adenosyl-L-methionine = 2-methylsulfanyl-N(6)-dimethylallyladenosine(37) in tRNA + (sulfur carrier)-H + 5'-deoxyadenosine + L-methionine + A + S-adenosyl-L-homocysteine + 2 H(+). In terms of biological role, catalyzes the methylthiolation of N6-(dimethylallyl)adenosine (i(6)A), leading to the formation of 2-methylthio-N6-(dimethylallyl)adenosine (ms(2)i(6)A) at position 37 in tRNAs that read codons beginning with uridine. The chain is tRNA-2-methylthio-N(6)-dimethylallyladenosine synthase from Acidiphilium cryptum (strain JF-5).